Here is a 434-residue protein sequence, read N- to C-terminus: MFS-type transporter AFUA_1G00970 (434 aa).

Transmembrane regions (helical) follow at residues Val21–Phe41, Trp60–Val80, Val87–Ser107, Ile112–Phe132, Leu145–Ile165, Val182–Pro202, Val240–Phe260, Tyr278–Ala298, Val301–Trp321, Leu327–Leu347, Ala364–Gly384, and Leu393–Ala413. Residues Pro201 to Thr225 form a disordered region.

It belongs to the major facilitator superfamily. Monocarboxylate porter (TC 2.A.1.13) family.

The protein localises to the cell membrane. Functionally, MFS-type transporter; part of the gene cluster that mediates the biosynthesis of fumigermin that inhibits germination of spores of the inducing S.rapamycinicus, and thus helps the fungus to defend resources in the shared habitat against a bacterial competitor. May be involved in the secretion of fumigermin. This chain is MFS-type transporter AFUA_1G00970, found in Aspergillus fumigatus (strain ATCC MYA-4609 / CBS 101355 / FGSC A1100 / Af293) (Neosartorya fumigata).